We begin with the raw amino-acid sequence, 407 residues long: Argininosuccinate synthase (407 aa).

ATP is bound by residues 11 to 19 (AYSGGLDTS) and Ala38. 2 residues coordinate L-citrulline: Tyr91 and Ser96. Residue Gly121 participates in ATP binding. L-aspartate contacts are provided by Thr123, Asn127, and Asp128. L-citrulline is bound at residue Asn127. Residues Arg131, Ser181, Ser190, Glu266, and Tyr278 each coordinate L-citrulline.

It belongs to the argininosuccinate synthase family. Type 1 subfamily. In terms of assembly, homotetramer.

It is found in the cytoplasm. The catalysed reaction is L-citrulline + L-aspartate + ATP = 2-(N(omega)-L-arginino)succinate + AMP + diphosphate + H(+). It participates in amino-acid biosynthesis; L-arginine biosynthesis; L-arginine from L-ornithine and carbamoyl phosphate: step 2/3. The protein is Argininosuccinate synthase of Campylobacter concisus (strain 13826).